Reading from the N-terminus, the 405-residue chain is Dematin (405 aa).

Disordered regions lie at residues 1–29 (MERLQKQPLTSPGSVSSSRDSSVPGSPSS), 81–100 (SRECSLSPKSTSPPPSPEVW), and 108–332 (IISQ…DRGN). Positions 11 to 29 (SPGSVSSSRDSSVPGSPSS) are enriched in low complexity. Residues Ser-16, Ser-18, Ser-26, Ser-92, Ser-96, Ser-110, and Ser-113 each carry the phosphoserine modification. Positions 113-124 (STPRTTGTPRTS) are enriched in low complexity. Thr-114 is subject to Phosphothreonine. Ser-156 and Ser-226 each carry phosphoserine. The span at 216 to 228 (EEEEEEEDDDSEE) shows a compositional bias: acidic residues. An interaction with RASGRF2 region spans residues 224–308 (DDSEEEIKAI…SRLQSTEFSP (85 aa)). 2 stretches are compositionally biased toward basic and acidic residues: residues 229 to 242 (EIKAIRERQKEELS) and 252 to 261 (ILKEEMEKSL). Phosphoserine occurs at positions 269, 279, 289, 303, 315, 333, 372, and 383. Over residues 277-292 (HTSLHSGTSKSSSLPS) the composition is skewed to low complexity. A compositionally biased stretch (polar residues) spans 294-322 (GRTTLSRLQSTEFSPSGSEAGSPGLQNGE). Residues 337 to 405 (VLEQKIYPYE…NELKKKASLF (69 aa)) enclose the HP domain. The residue at position 403 (Ser-403) is a Phosphoserine; by PKA.

Belongs to the villin/gelsolin family. Monomeric (isoform 2); under reducing conditions. Self-associates. Exists under oxidizing condition as a trimer of two isoforms 2 and isoform 1 linked by disulfide bonds. Found in a complex with DMTN, F-actin and spectrin. Found in a complex with ADD2, DMTN and SLC2A1. Interacts with F-actin, ITPKB and spectrin. Isoform 2 interacts with SLC2A1 (via C-terminus cytoplasmic region). Interacts with RASGRF2. Phosphorylated. Phosphorylation at Ser-403 by PKA causes the C-terminal headpiece domain to associate with the N-terminal core domain, and leads to the inhibition of its actin bundling activity. Expressed in platelets. Isoform 1 and isoform 2 are expressed in mature erythrocytes (at protein level).

It is found in the cytoplasm. The protein localises to the cytosol. The protein resides in the perinuclear region. Its subcellular location is the cytoskeleton. It localises to the cell membrane. It is found in the membrane. The protein localises to the endomembrane system. The protein resides in the cell projection. Membrane-cytoskeleton-associated protein with F-actin-binding activity that induces F-actin bundles formation and stabilization. Its F-actin-bundling activity is reversibly regulated upon its phosphorylation by the cAMP-dependent protein kinase A (PKA). Binds to the erythrocyte membrane glucose transporter-1 SLC2A1/GLUT1, and hence stabilizes and attaches the spectrin-actin network to the erythrocytic plasma membrane. Plays a role in maintaining the functional integrity of PKA-activated erythrocyte shape and the membrane mechanical properties. Also plays a role as a modulator of actin dynamics in fibroblasts; acts as a negative regulator of the RhoA activation pathway. In platelets, functions as a regulator of internal calcium mobilization across the dense tubular system that affects platelet granule secretion pathways and aggregation. Also required for the formation of a diverse set of cell protrusions, such as filopodia and lamellipodia, necessary for platelet cell spreading, motility and migration. Acts as a tumor suppressor and inhibits malignant cell transformation. In Mus musculus (Mouse), this protein is Dematin (Dmtn).